The primary structure comprises 345 residues: MQGTWFSLFVVVMVSHLACGGECSFGSHLADMAGLSGRHDKERHQAKKRYYHSMYGNQTPYPYANGQQASPPPQGQLLIIQNPDGSFMIVDQQGVPQVPQAAGGPGSPMNGGYYMPTGVYTAQVVPGTPGHPVQAIPQQPLRTQATATYYHPAAVPPPGPSVFVFTPSSVQPGAEVTPGYSGLQLRQQSQYGYSYPGTTSTPTPPPPASYGYPVFPAFPRLPAFSDSVSVSTEDSGLTGVKDSSSSESTVTPADEAASESEEGDKTSRKSKVKKGILTGLGVAATLAAAAAAAKAVKGFGGTRTSTAPAEAGKTELDDGYRPPPFNPRPSPYAELLKDLERMRKE.

Residues 1 to 20 (MQGTWFSLFVVVMVSHLACG) form the signal peptide. Positions 227–251 (SVSVSTEDSGLTGVKDSSSSESTVT) are enriched in polar residues. Residues 227–271 (SVSVSTEDSGLTGVKDSSSSESTVTPADEAASESEEGDKTSRKSK) are disordered. The helical transmembrane segment at 276–296 (ILTGLGVAATLAAAAAAAKAV) threads the bilayer. Residues 298-345 (GFGGTRTSTAPAEAGKTELDDGYRPPPFNPRPSPYAELLKDLERMRKE) form a disordered region. Over residues 321–330 (RPPPFNPRPS) the composition is skewed to pro residues. The segment covering 335-345 (LLKDLERMRKE) has biased composition (basic and acidic residues).

O-glycosylated.

The protein localises to the secreted. Its subcellular location is the parasitophorous vacuole lumen. The protein resides in the parasitophorous vacuole membrane. It is found in the cytoplasmic vesicle. It localises to the secretory vesicle. In terms of biological role, major granular component involved in excreted-secreted antigen (ESA) immunity. This is Dense granule protein 4 (GRA4) from Toxoplasma gondii.